The primary structure comprises 62 residues: Phylloseptin-Az7 (62 aa).

The first 19 residues, 1–19 (LKKSLFLVLFLGLVSLSIC), serve as a signal peptide directing secretion. Positions 20-40 (EEEKRETEEKENEQEDDKSEE) are excised as a propeptide. At F61 the chain carries Phenylalanine amide.

Belongs to the frog skin active peptide (FSAP) family. Phylloseptin subfamily. As to expression, expressed by the skin glands.

Its subcellular location is the secreted. Functionally, has antimicrobial activity. In Pithecopus azureus (Orange-legged monkey tree frog), this protein is Phylloseptin-Az7 (psn15).